We begin with the raw amino-acid sequence, 343 residues long: 3-hydroxy-3-methylglutaryl-CoA lyase, cytoplasmic (343 aa).

Glycine 2 is lipidated: N-myristoyl glycine. A Pyruvate carboxyltransferase domain is found at valine 48–methionine 315. Substrate is bound at residue arginine 56. Residues aspartate 57, histidine 248, and histidine 250 each coordinate a divalent metal cation. The active site involves cysteine 281. Asparagine 290 serves as a coordination point for a divalent metal cation.

This sequence belongs to the HMG-CoA lyase family. It depends on a divalent metal cation as a cofactor. As to expression, present at high level in duodenum and small intestine (at protein level).

It is found in the cytoplasm. It localises to the cytosol. The protein resides in the endoplasmic reticulum membrane. It catalyses the reaction (3S)-3-hydroxy-3-methylglutaryl-CoA = acetoacetate + acetyl-CoA. It participates in metabolic intermediate metabolism; (S)-3-hydroxy-3-methylglutaryl-CoA degradation; acetoacetate from (S)-3-hydroxy-3-methylglutaryl-CoA: step 1/1. Functionally, non-mitochondrial 3-hydroxy-3-methylglutaryl-CoA lyase that catalyzes a cation-dependent cleavage of (S)-3-hydroxy-3-methylglutaryl-CoA into acetyl-CoA and acetoacetate, a key step in ketogenesis, the products of which support energy production in nonhepatic animal tissues. This is 3-hydroxy-3-methylglutaryl-CoA lyase, cytoplasmic (Hmgcll1) from Rattus norvegicus (Rat).